The sequence spans 322 residues: F-actin-capping protein subunit beta (322 aa).

Belongs to the F-actin-capping protein beta subunit family. In terms of assembly, component of the F-actin capping complex, composed of a heterodimer of an alpha and a beta subunit.

It localises to the cytoplasm. It is found in the cytoskeleton. Its subcellular location is the actin patch. In terms of biological role, F-actin-capping proteins bind in a Ca(2+)-independent manner to the fast growing ends of actin filaments (barbed end) thereby blocking the exchange of subunits at these ends. Unlike other capping proteins (such as gelsolin and severin), these proteins do not sever actin filaments. This chain is F-actin-capping protein subunit beta (cap2), found in Aspergillus fumigatus (strain ATCC MYA-4609 / CBS 101355 / FGSC A1100 / Af293) (Neosartorya fumigata).